We begin with the raw amino-acid sequence, 79 residues long: Darcynin (79 aa).

Belongs to the darcynin family.

The sequence is that of Darcynin from Chromobacterium violaceum (strain ATCC 12472 / DSM 30191 / JCM 1249 / CCUG 213 / NBRC 12614 / NCIMB 9131 / NCTC 9757 / MK).